Reading from the N-terminus, the 403-residue chain is Non-structural maintenance of chromosomes element 4 homolog A (403 aa).

The span at 1-45 shows a compositional bias: basic and acidic residues; the sequence is MRKTVKRESEATGGKREADDEPEKLRSVKKEKQRKTEADSVRPDE. Disordered regions lie at residues 1 to 57, 194 to 226, and 342 to 403; these read MRKT…QGIS, LKQR…EEKT, and SSCP…LTSS. A compositionally biased stretch (basic residues) spans 196–206; sequence QRKRAPNRKRT. Residues 342–353 are compositionally biased toward low complexity; it reads SSCPAASAPASA. The span at 354 to 363 shows a compositional bias: polar residues; it reads DFTQDTQTTP. Residues 384–393 are compositionally biased toward basic and acidic residues; the sequence is TPDKEGDGTR. A compositionally biased stretch (basic residues) spans 394-403; sequence RRCKRRLTSS.

This sequence belongs to the NSE4 family. Interacts with SMC5, SMC6A or SMC6B. The SMC5-SMC6 complex is composed of the SMC5 and SMC6 heterodimer attached via their hinge domain and from the non-SMC subunit NSE4A or NSE4B. Expressed in seedlings, rosette leaves and floral buds.

It localises to the nucleus. Component of the SMC5-SMC6 complex, that promotes sister chromatid alignment after DNA damage and facilitates double-stranded DNA breaks (DSBs) repair via homologous recombination between sister chromatids. The sequence is that of Non-structural maintenance of chromosomes element 4 homolog A (NSE4A) from Arabidopsis thaliana (Mouse-ear cress).